The following is a 300-amino-acid chain: MDVVLYIAAAAILLVLIVFSVKIRGRTQDADVEDHQNVTARVSARPQAAPERAAGMPRRRRGLHSRVNAQRAQRASDNEDSPVEADEDEEGRNASEERPQAAGKVGAKKQRKLEEKQARKAQREAEQEEREERKRLQELRDQERQKEEEKERQQEQKQEEELQRVKEEQERREEEEYQRLKESFIIEDQGEAEELTEHESQSLLQEFIQYVQKSKVVLLEDLASQFGLRTQDAIARLQDLIADGSLTGVIDDRGKFIFITPEELNAVAQFIKQRGRVSISELAQASNTLINLTPDIHSSA.

The Lumenal portion of the chain corresponds to 1–2; sequence MD. The chain crosses the membrane as a helical span at residues 3–23; that stretch reads VVLYIAAAAILLVLIVFSVKI. The Cytoplasmic portion of the chain corresponds to 24 to 300; that stretch reads RGRTQDADVE…NLTPDIHSSA (277 aa). Residues 28–173 form a disordered region; sequence QDADVEDHQN…RVKEEQERRE (146 aa). Over residues 78 to 90 the composition is skewed to acidic residues; the sequence is NEDSPVEADEDEE. A compositionally biased stretch (basic and acidic residues) spans 112–173; it reads KLEEKQARKA…RVKEEQERRE (62 aa). Residues 183–197 carry the UFM1-interacting motif (UFIM) motif; the sequence is SFIIEDQGEAEELTE. One can recognise a PCI domain in the interval 217 to 261; it reads VLLEDLASQFGLRTQDAIARLQDLIADGSLTGVIDDRGKFIFITP.

It belongs to the DDRGK1 family. As to quaternary structure, component of the UFM1 ribosome E3 ligase (UREL) complex, composed of ufl1, ddrgk1 and cdk5rap3.

The protein localises to the endoplasmic reticulum membrane. In terms of biological role, component of the UFM1 ribosome E3 ligase (UREL) complex, a multiprotein complex that catalyzes ufmylation of endoplasmic reticulum-docked proteins. The UREL complex plays a key role in ribosome recycling by mediating mono-ufmylation of the RPL26/uL24 subunit of the 60S ribosome following ribosome dissociation: ufmylation weakens the junction between post-termination 60S subunits and SEC61 translocons, promoting release and recycling of the large ribosomal subunit from the endoplasmic reticulum membrane. Ufmylation of RPL26/uL24 and subsequent 60S ribosome recycling either take place after normal termination of translation or after ribosome stalling during cotranslational translocation at the endoplasmic reticulum. Within the UREL complex, DDRGK1 tethers the complex to the endoplasmic reticulum membrane to restrict its activity to endoplasmic reticulum-docked ribosomes and acts as an ufmylation 'reader': following RPL26/uL24 ufmylation, DDRGK1 specifically binds to ufmylated RPL26/uL24 via its UFIM motif, resulting in stable association between the 60S ribosome and the UREL complex, followed by dissociation of the 60S ribosome subunit from the endoplasmic reticulum membrane. The UREL complex is also involved in reticulophagy in response to endoplasmic reticulum stress by promoting ufmylation of proteins such as CYB5R3 and RPN1, thereby promoting lysosomal degradation of ufmylated proteins. Plays a role in cartilage development through sox9, inhibiting the ubiquitin-mediated proteasomal degradation of this transcriptional regulator. Required for stabilization and ufmylation of ATG9A. This chain is DDRGK domain-containing protein 1, found in Danio rerio (Zebrafish).